The following is a 311-amino-acid chain: Putative ribose-phosphate pyrophosphokinase 2 (311 aa).

ATP contacts are provided by residues Asp38–Glu40 and Arg97–Gln98. Residues His131 and Asp171 each contribute to the Mg(2+) site. Position 219 (Asp219) interacts with D-ribose 5-phosphate.

This sequence belongs to the ribose-phosphate pyrophosphokinase family. Class I subfamily. Homohexamer. Mg(2+) is required as a cofactor.

The protein resides in the cytoplasm. The enzyme catalyses D-ribose 5-phosphate + ATP = 5-phospho-alpha-D-ribose 1-diphosphate + AMP + H(+). The protein operates within metabolic intermediate biosynthesis; 5-phospho-alpha-D-ribose 1-diphosphate biosynthesis; 5-phospho-alpha-D-ribose 1-diphosphate from D-ribose 5-phosphate (route I): step 1/1. Involved in the biosynthesis of the central metabolite phospho-alpha-D-ribosyl-1-pyrophosphate (PRPP) via the transfer of pyrophosphoryl group from ATP to 1-hydroxyl of ribose-5-phosphate (Rib-5-P). In Listeria monocytogenes serotype 4b (strain F2365), this protein is Putative ribose-phosphate pyrophosphokinase 2.